A 193-amino-acid polypeptide reads, in one-letter code: Bcl-2-like protein 2 (193 aa).

Position 2 is an N-acetylalanine (alanine 2). A BH4 motif is present at residues 9–29 (DTRALVADFVGYKLRQKGYVC). The BH1 signature appears at 85–104 (ELFQGGPNWGRLVAFFVFGA). A BH2 motif is present at residues 136 to 151 (DWIHSSGGWAEFTALY). At alanine 177 the chain carries Phosphoserine.

It belongs to the Bcl-2 family. As to quaternary structure, interacts with HIF3A (via C-terminus domain). Interacts with BOP. In terms of tissue distribution, expressed (at protein level) in a wide range of tissues with highest levels in brain, spinal cord, testis, pancreas, heart, spleen and mammary glands. Moderate levels found in thymus, ovary and small intestine. Not detected in salivary gland, muscle or liver. Also expressed in cell lines of myeloid, fibroblast and epithelial origin. Not detected in most lymphoid cell lines.

The protein localises to the mitochondrion membrane. In terms of biological role, promotes cell survival. Blocks dexamethasone-induced apoptosis. Mediates survival of postmitotic Sertoli cells by suppressing death-promoting activity of BAX. The protein is Bcl-2-like protein 2 (BCL2L2) of Homo sapiens (Human).